Here is a 244-residue protein sequence, read N- to C-terminus: Isoprenyl transferase (244 aa).

Asp-20 is an active-site residue. Asp-20 serves as a coordination point for Mg(2+). Residues 21–24, Trp-25, Arg-33, His-37, and 65–67 each bind substrate; these read GNGR and SSE. The Proton acceptor role is filled by Asn-68. Substrate contacts are provided by residues Trp-69, Arg-71, Arg-188, and 194–196; that span reads RIS. Residue Glu-207 coordinates Mg(2+).

Belongs to the UPP synthase family. Homodimer. Mg(2+) serves as cofactor.

Its function is as follows. Catalyzes the condensation of isopentenyl diphosphate (IPP) with allylic pyrophosphates generating different type of terpenoids. The chain is Isoprenyl transferase from Rhodopirellula baltica (strain DSM 10527 / NCIMB 13988 / SH1).